Consider the following 611-residue polypeptide: 4-hydroxy-3-methylbut-2-en-1-yl diphosphate synthase (flavodoxin) (611 aa).

4 residues coordinate [4Fe-4S] cluster: Cys520, Cys523, Cys554, and Glu561.

This sequence belongs to the IspG family. [4Fe-4S] cluster is required as a cofactor.

It carries out the reaction (2E)-4-hydroxy-3-methylbut-2-enyl diphosphate + oxidized [flavodoxin] + H2O + 2 H(+) = 2-C-methyl-D-erythritol 2,4-cyclic diphosphate + reduced [flavodoxin]. It functions in the pathway isoprenoid biosynthesis; isopentenyl diphosphate biosynthesis via DXP pathway; isopentenyl diphosphate from 1-deoxy-D-xylulose 5-phosphate: step 5/6. Its function is as follows. Converts 2C-methyl-D-erythritol 2,4-cyclodiphosphate (ME-2,4cPP) into 1-hydroxy-2-methyl-2-(E)-butenyl 4-diphosphate. This Parabacteroides distasonis (strain ATCC 8503 / DSM 20701 / CIP 104284 / JCM 5825 / NCTC 11152) protein is 4-hydroxy-3-methylbut-2-en-1-yl diphosphate synthase (flavodoxin).